The sequence spans 592 residues: A-type ATP synthase subunit A (592 aa).

233-240 serves as a coordination point for ATP; that stretch reads GPFGSGKT.

Belongs to the ATPase alpha/beta chains family. As to quaternary structure, has multiple subunits with at least A(3), B(3), C, D, E, F, H, I and proteolipid K(x).

It is found in the cell membrane. It catalyses the reaction ATP + H2O + 4 H(+)(in) = ADP + phosphate + 5 H(+)(out). Component of the A-type ATP synthase that produces ATP from ADP in the presence of a proton gradient across the membrane. The A chain is the catalytic subunit. The protein is A-type ATP synthase subunit A of Saccharolobus islandicus (strain M.16.27) (Sulfolobus islandicus).